The chain runs to 680 residues: Methionine--tRNA ligase (680 aa).

Residues 15-25 (PYANGPVHIGH) carry the 'HIGH' region motif. Residues Cys-147, Cys-150, Cys-160, and Cys-163 each coordinate Zn(2+). The short motif at 332–336 (KISTS) is the 'KMSKS' region element. Thr-335 serves as a coordination point for ATP. The region spanning 579–680 (DFLKLDIRVG…AEVAPGSQVK (102 aa)) is the tRNA-binding domain.

It belongs to the class-I aminoacyl-tRNA synthetase family. MetG type 1 subfamily. As to quaternary structure, homodimer. Requires Zn(2+) as cofactor.

Its subcellular location is the cytoplasm. The enzyme catalyses tRNA(Met) + L-methionine + ATP = L-methionyl-tRNA(Met) + AMP + diphosphate. Functionally, is required not only for elongation of protein synthesis but also for the initiation of all mRNA translation through initiator tRNA(fMet) aminoacylation. The sequence is that of Methionine--tRNA ligase from Porphyromonas gingivalis (strain ATCC 33277 / DSM 20709 / CIP 103683 / JCM 12257 / NCTC 11834 / 2561).